The following is a 213-amino-acid chain: Ribonuclease HII (213 aa).

The region spanning Gly2–Arg213 is the RNase H type-2 domain. A divalent metal cation is bound by residues Asp8, Glu9, and Asp113.

This sequence belongs to the RNase HII family. Requires Mn(2+) as cofactor. The cofactor is Mg(2+).

Its subcellular location is the cytoplasm. It carries out the reaction Endonucleolytic cleavage to 5'-phosphomonoester.. Functionally, endonuclease that specifically degrades the RNA of RNA-DNA hybrids. The chain is Ribonuclease HII from Thermofilum pendens (strain DSM 2475 / Hrk 5).